Consider the following 170-residue polypeptide: Small ribosomal subunit protein uS5 (170 aa).

Positions 12 to 75 (LSELLVSVRR…NAAKKSMIRV (64 aa)) constitute an S5 DRBM domain.

Belongs to the universal ribosomal protein uS5 family. As to quaternary structure, part of the 30S ribosomal subunit. Contacts proteins S4 and S8.

Its function is as follows. With S4 and S12 plays an important role in translational accuracy. Located at the back of the 30S subunit body where it stabilizes the conformation of the head with respect to the body. The chain is Small ribosomal subunit protein uS5 from Wolbachia pipientis wMel.